The following is a 360-amino-acid chain: Phosphoserine aminotransferase (360 aa).

Arg42 contacts L-glutamate. Residues 76 to 77 (AS), Trp102, Thr152, Asp172, and Gln195 each bind pyridoxal 5'-phosphate. Lys196 is subject to N6-(pyridoxal phosphate)lysine. Residue 237 to 238 (NT) participates in pyridoxal 5'-phosphate binding.

This sequence belongs to the class-V pyridoxal-phosphate-dependent aminotransferase family. SerC subfamily. Homodimer. Pyridoxal 5'-phosphate is required as a cofactor.

It localises to the cytoplasm. It carries out the reaction O-phospho-L-serine + 2-oxoglutarate = 3-phosphooxypyruvate + L-glutamate. The enzyme catalyses 4-(phosphooxy)-L-threonine + 2-oxoglutarate = (R)-3-hydroxy-2-oxo-4-phosphooxybutanoate + L-glutamate. The protein operates within amino-acid biosynthesis; L-serine biosynthesis; L-serine from 3-phospho-D-glycerate: step 2/3. Functionally, catalyzes the reversible conversion of 3-phosphohydroxypyruvate to phosphoserine and of 3-hydroxy-2-oxo-4-phosphonooxybutanoate to phosphohydroxythreonine. This chain is Phosphoserine aminotransferase, found in Bacillus cereus (strain ZK / E33L).